A 182-amino-acid polypeptide reads, in one-letter code: Mu-like prophage FluMu protein gp45 (182 aa).

A disordered region spans residues Thr-159–Pro-182. The span at Lys-169–Pro-182 shows a compositional bias: basic and acidic residues.

The protein to phage Mu protein gp45.

The protein is Mu-like prophage FluMu protein gp45 of Haemophilus influenzae (strain ATCC 51907 / DSM 11121 / KW20 / Rd).